The primary structure comprises 247 residues: Carboxy-S-adenosyl-L-methionine synthase (247 aa).

S-adenosyl-L-methionine is bound by residues Y39, 64 to 66 (GCS), 89 to 90 (DN), 117 to 118 (DI), N132, and R199.

This sequence belongs to the class I-like SAM-binding methyltransferase superfamily. Cx-SAM synthase family. In terms of assembly, homodimer.

The catalysed reaction is prephenate + S-adenosyl-L-methionine = carboxy-S-adenosyl-L-methionine + 3-phenylpyruvate + H2O. In terms of biological role, catalyzes the conversion of S-adenosyl-L-methionine (SAM) to carboxy-S-adenosyl-L-methionine (Cx-SAM). In Klebsiella pneumoniae (strain 342), this protein is Carboxy-S-adenosyl-L-methionine synthase.